The following is a 121-amino-acid chain: Large ribosomal subunit protein bL12 (121 aa).

Belongs to the bacterial ribosomal protein bL12 family. Homodimer. Part of the ribosomal stalk of the 50S ribosomal subunit. Forms a multimeric L10(L12)X complex, where L10 forms an elongated spine to which 2 to 4 L12 dimers bind in a sequential fashion. Binds GTP-bound translation factors.

Its function is as follows. Forms part of the ribosomal stalk which helps the ribosome interact with GTP-bound translation factors. Is thus essential for accurate translation. This is Large ribosomal subunit protein bL12 from Malacoplasma penetrans (strain HF-2) (Mycoplasma penetrans).